Reading from the N-terminus, the 138-residue chain is Diuretic hormone 1 (138 aa).

The first 19 residues, 1-19, serve as a signal peptide directing secretion; that stretch reads MMWWAIWCVMVVVSSAASA. The propeptide occupies 20 to 78; it reads APAPDSAPMDLVQIDSAGPDDESLGYAVSSLEGRYGAEAPWLYLLAEMPRDSQIGRAAV. At I121 the chain carries Isoleucine amide. The propeptide occupies 125 to 138; it reads GLQWSRSEQPSAYY.

Belongs to the sauvagine/corticotropin-releasing factor/urotensin I family.

The protein resides in the secreted. Its function is as follows. Regulation of fluid secretion. This chain is Diuretic hormone 1, found in Manduca sexta (Tobacco hawkmoth).